Reading from the N-terminus, the 102-residue chain is Putative defensin-like protein 152 (102 aa).

An N-terminal signal peptide occupies residues 1 to 29 (MKKASQLSTTILTIFIVLAIGMMVKGTVG). Cystine bridges form between cysteine 34/cysteine 93, cysteine 51/cysteine 71, cysteine 56/cysteine 87, and cysteine 60/cysteine 89.

This sequence belongs to the DEFL family.

The protein resides in the secreted. The sequence is that of Putative defensin-like protein 152 (LCR11) from Arabidopsis thaliana (Mouse-ear cress).